The sequence spans 376 residues: Mitogen-activated protein kinase ERK-A (376 aa).

Residues 38–326 (YIKLAYIGEG…VEEALAHPYL (289 aa)) enclose the Protein kinase domain. ATP-binding positions include 44–52 (IGEGAYGMV) and lysine 67. The active-site Proton acceptor is the aspartate 162. A Phosphothreonine modification is found at threonine 198. Residues 198–200 (TEY) carry the TXY motif. Tyrosine 200 is subject to Phosphotyrosine.

It belongs to the protein kinase superfamily. CMGC Ser/Thr protein kinase family. MAP kinase subfamily. The cofactor is Mg(2+). Dually phosphorylated on Thr-198 and Tyr-200, which activates the enzyme. Phosphorylated on tyrosine residue(s) in response to insulin. In terms of tissue distribution, in third instar larvae, expressed in eye imaginal disks. In adults, expressed in head and body.

It localises to the cytoplasm. It is found in the nucleus. It catalyses the reaction L-seryl-[protein] + ATP = O-phospho-L-seryl-[protein] + ADP + H(+). The enzyme catalyses L-threonyl-[protein] + ATP = O-phospho-L-threonyl-[protein] + ADP + H(+). Its activity is regulated as follows. Activated by tyrosine and threonine phosphorylation. Functionally, serine/threonine kinase which acts as an essential component of the MAP kinase signal transduction pathway to regulate proliferation, differentiation and effect cell fate decisions in various tissues. Required downstream of phl/Raf in the sev/sevenless, tor/torso, and EGF receptor homolog Egfr signal transduction pathways. Required for embryonic epithelial tissue repair. During larval development, mediates Ptth/tor signaling leading to the production of ecdysone, a hormone required for the initiation of metamorphosis. This chain is Mitogen-activated protein kinase ERK-A, found in Drosophila melanogaster (Fruit fly).